Consider the following 53-residue polypeptide: uncharacterized protein (53 aa).

A helical membrane pass occupies residues 4-23 (STLIIIASNVVTVFVSVAVN). A coiled-coil region spans residues 24–50 (RTDISWLKQRLISLEERINKLGEKHVF).

It is found in the host membrane. This is an uncharacterized protein from Pseudoalteromonas phage PM2 (Bacteriophage PM2).